The following is a 388-amino-acid chain: Bifunctional enzyme IspD/IspF (388 aa).

A 2-C-methyl-D-erythritol 4-phosphate cytidylyltransferase region spans residues 1-228; sequence MRIAALLLAA…GVIDRNLLPR (228 aa). Positions 228 to 388 are 2-C-methyl-D-erythritol 2,4-cyclodiphosphate synthase; that stretch reads RVGLGYDVHA…SIMVPDNGEA (161 aa). Asp-234 and His-236 together coordinate a divalent metal cation. 4-CDP-2-C-methyl-D-erythritol 2-phosphate contacts are provided by residues 234-236 and 260-261; these read DVH and HS. His-268 is a binding site for a divalent metal cation. 4-CDP-2-C-methyl-D-erythritol 2-phosphate is bound by residues 282 to 284, 358 to 361, Phe-365, and Arg-368; these read DIG and TTSE.

The protein in the N-terminal section; belongs to the IspD/TarI cytidylyltransferase family. IspD subfamily. It in the C-terminal section; belongs to the IspF family. A divalent metal cation serves as cofactor.

It carries out the reaction 2-C-methyl-D-erythritol 4-phosphate + CTP + H(+) = 4-CDP-2-C-methyl-D-erythritol + diphosphate. The catalysed reaction is 4-CDP-2-C-methyl-D-erythritol 2-phosphate = 2-C-methyl-D-erythritol 2,4-cyclic diphosphate + CMP. Its pathway is isoprenoid biosynthesis; isopentenyl diphosphate biosynthesis via DXP pathway; isopentenyl diphosphate from 1-deoxy-D-xylulose 5-phosphate: step 2/6. It functions in the pathway isoprenoid biosynthesis; isopentenyl diphosphate biosynthesis via DXP pathway; isopentenyl diphosphate from 1-deoxy-D-xylulose 5-phosphate: step 4/6. Bifunctional enzyme that catalyzes the formation of 4-diphosphocytidyl-2-C-methyl-D-erythritol from CTP and 2-C-methyl-D-erythritol 4-phosphate (MEP) (IspD), and catalyzes the conversion of 4-diphosphocytidyl-2-C-methyl-D-erythritol 2-phosphate (CDP-ME2P) to 2-C-methyl-D-erythritol 2,4-cyclodiphosphate (ME-CPP) with a corresponding release of cytidine 5-monophosphate (CMP) (IspF). The sequence is that of Bifunctional enzyme IspD/IspF from Gluconobacter oxydans (strain 621H) (Gluconobacter suboxydans).